The sequence spans 811 residues: Potassium transporter 7 (811 aa).

The Cytoplasmic segment spans residues 1–52; the sequence is MPSYQYLLSLLFYILDCTDRFSVIVTIHNHRVGVLMIVLLQDQWKSYCRTIS. The helical transmembrane segment at 53-73 threads the bilayer; the sequence is LLAFQSFGVVYGDLSTSPLYV. At 74–93 the chain is on the extracellular side; sequence YKSAFSGRLNNYRDETTIFG. The helical transmembrane segment at 94–114 threads the bilayer; it reads LFSLIFWTLTLLPLLKYVIIV. The Cytoplasmic segment spans residues 115 to 181; it reads LNADDNGEGG…EKHRKLRTCL (67 aa). The helical transmembrane segment at 182–202 threads the bilayer; the sequence is LLFVLFGACMVIGDGVFTPAI. The Extracellular portion of the chain corresponds to 203–217; sequence SVLSAISGLKDPGPG. Residues 218-238 form a helical membrane-spanning segment; that stretch reads GIPDGWVVFIACIVLVGLFAL. The Cytoplasmic portion of the chain corresponds to 239-245; that stretch reads QHRGTHR. Residues 246–266 form a helical membrane-spanning segment; the sequence is VAFMFAPIVVVWLLSIGVIGL. At 267-296 the chain is on the extracellular side; sequence YNIIHWNHRIFLALSPHYVIKFFKMTGKDG. A helical membrane pass occupies residues 297–317; the sequence is WLSLGGVLLAITGTEAMFADL. Residues 318–326 lie on the Cytoplasmic side of the membrane; sequence GHFTAASIR. A helical membrane pass occupies residues 327 to 347; that stretch reads LAFVGAIYPCLVLQYMGQAAF. Over 348-366 the chain is Extracellular; the sequence is LSRNMSAVEDSFYQSVPRS. Asparagine 351 carries N-linked (GlcNAc...) asparagine glycosylation. A helical transmembrane segment spans residues 367-387; that stretch reads LFWPVFVIATLAAVVGSQSII. Residues 388-418 are Cytoplasmic-facing; that stretch reads SATFSIVKQCLSLGCFPRVKVVHTSRWIHGQ. A helical transmembrane segment spans residues 419–439; sequence IYIPEINWILMVLCLAVTLGF. Residues 440-450 are Extracellular-facing; sequence RDTTVIGNAYG. Residues 451–471 form a helical membrane-spanning segment; sequence LACIVVMFVTTWLMALVIIFV. Over 472 to 475 the chain is Cytoplasmic; the sequence is WQKN. A helical transmembrane segment spans residues 476-496; the sequence is ILLALLFVVAFGSIEVVYLSA. Residues 497–503 lie on the Extracellular side of the membrane; it reads AVTKVPQ. A helical transmembrane segment spans residues 504-524; sequence GGWAPIVFAFVFMLVMYVWHY. At 525–811 the chain is on the cytoplasmic side; that stretch reads GSRRKYLFDL…LVEVGMIYYV (287 aa). The segment at 680 to 702 is disordered; it reads TGLVMRDSNNEASGTSLTRSSRS.

Belongs to the HAK/KUP transporter (TC 2.A.72.3) family. As to expression, expressed in roots and shoots.

It is found in the membrane. Functionally, high-affinity potassium transporter. In Oryza sativa subsp. japonica (Rice), this protein is Potassium transporter 7 (HAK7).